The sequence spans 1402 residues: Erbin (1402 aa).

LRR repeat units lie at residues 23 to 44, 47 to 68, 70 to 91, 93 to 114, 116 to 137, 139 to 161, 162 to 183, 185 to 206, 208 to 229, 231 to 252, 254 to 275, 277 to 298, 300 to 321, 323 to 344, 346 to 367, 369 to 391, and 392 to 413; these read TVTTLDYSHCSLEQVPKEIFTF, TLEELYLDANQIEELPKQLFNC, SLHKLSLPDNDLTTLPASIANL, NLRELDVSKNGIQEFPENIKNC, VLTIVEASVNPISKLPDGFSQL, NLTQLYLNDAFLEFLPANFGRLT, KLQILELRENQLKMLPKTMNRL, QLERLDLGSNEFTEVPEVLEQL, GLREFWMDGNRLTFIPGFIGSL, QLTYLDVSKNNIEMVEEGISTC, NLQDFLLSSNSLQQLPETIGSL, NVTTLKIDENQLMYLPDSIGGL, SIEELDCSFNEIEALPSSIGQL, NMRTFAADHNYLQQLPPEIGNW, NITVLFLHCNKLETLPEEMGDM, KLKVINLSDNRLKNLPFSFTKLQ, and QLTAMWLSDNQSKPLIPLQKET. Phosphoserine is present on residues Ser-440 and Ser-444. 2 disordered regions span residues 465–489 and 507–543; these read DEDKDEREAPPREGNLKRYPTPYPD and DEETNEESGRDLKQHEDQQVVNKDKCVKTSESTTTKS. The segment covering 470–480 has biased composition (basic and acidic residues); the sequence is EREAPPREGNL. At Tyr-483 the chain carries Phosphotyrosine. Position 485 is a phosphothreonine (Thr-485). A compositionally biased stretch (basic and acidic residues) spans 507–534; that stretch reads DEETNEESGRDLKQHEDQQVVNKDKCVK. Residues Ser-595, Ser-599, Ser-600, and Ser-617 each carry the phosphoserine modification. The segment covering 629–638 has biased composition (basic and acidic residues); the sequence is NKKDDAKDAD. Residues 629 to 694 are disordered; the sequence is NKKDDAKDAD…PVDSNSKVRQ (66 aa). The span at 647 to 659 shows a compositional bias: low complexity; the sequence is NSNQNNSNCSSPS. The segment covering 660 to 689 has biased composition (polar residues); sequence RMSDSVSLNTDSSQDTSLCSPVKQTPVDSN. Residues Ser-712, Ser-849, Ser-854, and Ser-869 each carry the phosphoserine modification. Positions 824–864 are disordered; the sequence is EDTAPSPGRVEPQKASSSADVGISKSTEDLSPQRSGPTGAV. Thr-914 bears the Phosphothreonine mark. The residue at position 917 (Tyr-917) is a Phosphotyrosine. At Ser-928 the chain carries Phosphoserine. Residue Tyr-970 is modified to Phosphotyrosine. Disordered stretches follow at residues 990-1018 and 1070-1093; these read WHPKQNPQIDPVSFPPQRLPRSESAENHS and TTIQRQSSVSSTASVNLGDPTRRT. Positions 1070-1084 are enriched in polar residues; sequence TTIQRQSSVSSTASV. The residue at position 1097 (Tyr-1097) is a Phosphotyrosine. Disordered stretches follow at residues 1107-1187, 1198-1217, and 1222-1274; these read GRTP…VPHD, AKKLEKHPQTSSPGECCQDD, and EEQN…VARH. Composition is skewed to polar residues over residues 1128–1139 and 1149–1164; these read GPNTSRPQSARP and MSVSDFNYSRTSPSKR. Phosphoserine is present on residues Ser-1150 and Ser-1171. 3 positions are modified to phosphoserine: Leu-1231, Arg-1234, and Ser-1276. In terms of domain architecture, PDZ spans 1311–1400; the sequence is EIRVRVEKDP…AVDLIIVREV (90 aa).

Belongs to the LAP (LRR and PDZ) protein family. In terms of assembly, interacts with ERBB2, BPAG1 and ITGB4. May favor the localization of ERBB2, by restricting its presence to the basolateral membrane of epithelial cells. Also found to interact with ARVCF and delta catenin. Interacts (via C-terminus) with DST (via N-terminus). Interacts with NOD2 (via CARD domain). Isoform 2 is phosphorylated on Ser-1231 and Ser-1234.

It localises to the cell junction. It is found in the hemidesmosome. The protein localises to the nucleus membrane. Its subcellular location is the basolateral cell membrane. Acts as an adapter for the receptor ERBB2, in epithelia. By binding the unphosphorylated ERBB2 'Tyr-1248' receptor, it may contribute to stabilize this unphosphorylated state. Inhibits NOD2-dependent NF-kappa-B signaling and pro-inflammatory cytokine secretion. The sequence is that of Erbin from Mus musculus (Mouse).